A 99-amino-acid chain; its full sequence is DNA-binding protein HmvA (99 aa).

The interval 52–55 (KTIK) is interaction with DNA.

This sequence belongs to the archaeal histone HMF family. In terms of assembly, homodimer or heterodimer with another histone. Dimers then assemble into higher oligomers, with the DNA wrapped around the protein core.

It localises to the cytoplasm. It is found in the chromosome. Its function is as follows. Binds and compact DNA (95 to 150 base pairs) to form nucleosome-like structures that contain positive DNA supercoils. Increases the resistance of DNA to thermal denaturation (in vitro). The protein is DNA-binding protein HmvA (hmvA) of Methanococcus voltae.